The chain runs to 328 residues: Formimidoylglutamase (328 aa).

6 residues coordinate Mn(2+): H133, D159, H161, D163, D253, and D255.

The protein belongs to the arginase family. Mn(2+) is required as a cofactor.

It carries out the reaction N-formimidoyl-L-glutamate + H2O = formamide + L-glutamate. It participates in amino-acid degradation; L-histidine degradation into L-glutamate; L-glutamate from N-formimidoyl-L-glutamate (hydrolase route): step 1/1. Catalyzes the conversion of N-formimidoyl-L-glutamate to L-glutamate and formamide. In Streptococcus pyogenes serotype M18 (strain MGAS8232), this protein is Formimidoylglutamase.